Here is a 1783-residue protein sequence, read N- to C-terminus: 6-methylsalicylic acid synthase (1783 aa).

A compositionally biased stretch (polar residues) spans 1-31; sequence MITSTSSTEVLTPANGSDDSKGTTTPATSSG. The interval 1 to 40 is disordered; that stretch reads MITSTSSTEVLTPANGSDDSKGTTTPATSSGDPEMHDDLL. The Ketosynthase family 3 (KS3) domain occupies 45 to 474; it reads HDDVAIIGMA…GTVSHAIIEA (430 aa). Catalysis depends on for beta-ketoacyl synthase activity residues cysteine 217, histidine 352, and histidine 394. The interval 587–884 is malonyl-CoA:ACP transacylase (MAT) domain; sequence WVFSGHGAQW…TPTMVRKQPA (298 aa). Serine 673 serves as the catalytic For acyl/malonyl transferase activity. Residues 942-1215 form a product template (PT) domain region; sequence THKPAANDLL…AFAGVEGESL (274 aa). The interval 948-1064 is N-terminal hotdog fold; the sequence is NDLLGTRTAL…ATVGADATPS (117 aa). One can recognise a PKS/mFAS DH domain in the interval 948 to 1216; sequence NDLLGTRTAL…FAGVEGESLS (269 aa). The Proton acceptor; for dehydratase activity role is filled by histidine 980. The tract at residues 1078 to 1216 is C-terminal hotdog fold; that stretch reads PQKLSDSFSI…FAGVEGESLS (139 aa). The active-site Proton donor; for dehydratase activity is the aspartate 1130. A Carrier domain is found at 1707–1781; sequence EYVLVVVKKC…HLVEYFCQVL (75 aa). O-(pantetheine 4'-phosphoryl)serine is present on serine 1741.

The catalysed reaction is 3 malonyl-CoA + acetyl-CoA + NADPH + 3 H(+) = 6-methylsalicylate + 3 CO2 + NADP(+) + 4 CoA + H2O. Its pathway is secondary metabolite biosynthesis; terpenoid biosynthesis. Non-reducing polyketide synthase; part of the gene cluster that mediates the biosynthesis of macrophorins, isoprenoid epoxycyclohexenones containing cyclized drimane moieties. The first step of the pathway is the synthesis of 6-methylsalicylic acid (6-MSA) by the polyketide synthase macA. 6-MSA is then converted to m-cresol by the decarboxylase macB. The cytochrome P450 monooxygenase macC then catalyzes the oxidation of m-cresol to toluquinol. Epoxidation of toluquinol is then performed by the short chain dehydrogenase macD, with the help of macE, and a further prenylation by macG leads to 7-deacetoxyyanuthone A. The next step is the hydroxylation of C-22 of 7-deacetoxyyanuthone A by the cytochrome P450 monooxygenase macH to yield 22-deacetylyanuthone A. O-Mevalon transferase macI then attaches mevalon to the hydroxyl group of 22-deacetylyanuthone A to produce yanuthone E. The terpene cyclase macJ catalyzes the cyclization of 22-deacetylyanuthone A to macrophorin A. MacJ is also able to catalyze cyclization of yanuthone E and 7-deacetoxyyanuthone A to their corresponding macrophorins. The macJ products can be further modified by macH and macJ, as well as by the FAD-dependent monooxygenase macF, to produce additional macrophorins, including 4'-oxomacrophorin A, 4'-oxomacrophorin D and 4'-oxomacrophorin E. In Penicillium terrestre, this protein is 6-methylsalicylic acid synthase.